Consider the following 424-residue polypeptide: Probable methyltransferase EP424R (424 aa).

In terms of domain architecture, Adrift-type SAM-dependent 2'-O-MTase spans 103–315 (QIVTNAWLKM…TYIVGKNRLR (213 aa)). Positions 135 and 228 each coordinate S-adenosyl-L-methionine. Catalysis depends on K268, which acts as the Proton acceptor.

The protein resides in the virion. In Ornithodoros (relapsing fever ticks), this protein is Probable methyltransferase EP424R.